A 54-amino-acid polypeptide reads, in one-letter code: Glutathione S-transferase 6.7 (54 aa).

The protein belongs to the GST superfamily. Theta family. In terms of assembly, homodimer. Post-translationally, the N-terminus is blocked.

It localises to the cytoplasm. The enzyme catalyses RX + glutathione = an S-substituted glutathione + a halide anion + H(+). In terms of biological role, conjugation of reduced glutathione to a wide number of exogenous and endogenous hydrophobic electrophiles. This is Glutathione S-transferase 6.7 from Dicentrarchus labrax (European seabass).